The following is a 388-amino-acid chain: FBD-associated F-box protein At5g60610 (388 aa).

The 47-residue stretch at 1 to 47 (MDRISGLPDELLVKIISFVPTKVAVSTSILSKRWESLWKWVPKLECD) folds into the F-box domain. An FBD domain is found at 337–388 (NWKNIQRSVPKCLKSSLKTLEFAGYTARPEERDFLSFIFKKARCLKTSSISH).

The chain is FBD-associated F-box protein At5g60610 from Arabidopsis thaliana (Mouse-ear cress).